The sequence spans 373 residues: G protein-coupled receptor 137Ba (373 aa).

The Lumenal portion of the chain corresponds to 1–15 (MQKDSLPTLSPAVPP). Residues 16–36 (YVMLGLTVAYTIFYCLLFVFV) form a helical membrane-spanning segment. Topologically, residues 37–55 (YVQLWLVLRYRHKRFSYQT) are cytoplasmic. Residues 56 to 76 (VFLFLCLLWAALRALLFSFYF) form a helical membrane-spanning segment. Topologically, residues 77–84 (KNCVTANT) are lumenal. Residues 85–105 (LGPFCFWLLYCFPVCLQFFTL) traverse the membrane as a helical segment. Topologically, residues 106–135 (SLMNLYFAQVIFKAKSKYSPELQKYRLPLY) are cytoplasmic. A helical membrane pass occupies residues 136–156 (LLFLSISLLFLLVNLTCALLV). Residues 157 to 176 (KINRANTETVVLVRVTVNDS) are Lumenal-facing. The chain crosses the membrane as a helical span at residues 177–197 (LFVLCAVSLSLCLYRIAKMSL). At 198–213 (ANIYLEAKGTSVCQVT) the chain is on the cytoplasmic side. A helical transmembrane segment spans residues 214 to 234 (LIGVTVVLLYSSRACYNLVVL). Over 235–268 (ALTKIKSINSFDYDWYNVSDQADLKSTLGDAGYV) the chain is Lumenal. Residues 269-289 (VFGVILFVWELLPTSLVVYFF) traverse the membrane as a helical segment. Topologically, residues 290 to 373 (RVRKPTLDRS…HLAPEELNPY (84 aa)) are cytoplasmic.

This sequence belongs to the GPR137 family.

The protein localises to the lysosome membrane. Lysosomal integral membrane protein that regulates the localization and activity of mTORC1, a signaling complex promoting cell growth in response to growth factors, energy levels, and amino acids. Interacts with Rag GTPases and increases the lysosomial localization and activity of Rag GTPases and thereby regulates mTORC1 translocation and activity in lysosome. Also acts as a negative regulator of osteoclast activity. May be involved in interleukin-4-induced M2 macrophage polarization. In terms of biological role, also acts as a negative regulator of osteoclast activity. May be involved in interleukin-4-induced M2 macrophage polarization. The chain is G protein-coupled receptor 137Ba from Danio rerio (Zebrafish).